A 484-amino-acid chain; its full sequence is PTS system MurNAc-GlcNAc-specific EIIBC component (484 aa).

The PTS EIIB type-1 domain occupies 5-87; that stretch reads QQLAERIIAA…AELSGVKLGD (83 aa). The active-site Phosphocysteine intermediate; for EIIB activity is Cys-27. One can recognise a PTS EIIC type-1 domain in the interval 130-484; the sequence is KSIANIFIPL…AMRQTDLLGD (355 aa). A run of 10 helical transmembrane segments spans residues 135–155, 160–180, 200–220, 234–254, 274–294, 305–325, 349–369, 384–404, 408–428, and 450–470; these read IFIP…IAAV, MVAG…FNVI, FGAT…TGIA, LQPG…LSIV, IALL…AGFV, IISI…LPLV, LLPI…ALWV, ALPV…TLPL, FLTA…IGHI, and LGYI…TYLF.

It is found in the cell membrane. It carries out the reaction N-acetyl-beta-D-muramate-(1-&gt;4)-N-acetyl-D-glucosamine(out) + N(pros)-phospho-L-histidyl-[protein] = 6-phospho-N-acetyl-beta-D-muramate-(1-&gt;4)-N-acetyl-D-glucosamine(in) + L-histidyl-[protein]. It functions in the pathway cell wall biogenesis; peptidoglycan recycling. In terms of biological role, the phosphoenolpyruvate-dependent sugar phosphotransferase system (sugar PTS), a major carbohydrate active transport system, catalyzes the phosphorylation of incoming sugar substrates concomitantly with their translocation across the cell membrane. This system is involved in the uptake and phosphorylation of MurNAc-GlcNAc, the principle peptidoglycan turnover product of S.aureus, yielding cytoplasmic MurNAc 6P-GlcNAc. The protein is PTS system MurNAc-GlcNAc-specific EIIBC component of Staphylococcus aureus (strain bovine RF122 / ET3-1).